The chain runs to 287 residues: ATP synthase gamma chain (287 aa).

The protein belongs to the ATPase gamma chain family. F-type ATPases have 2 components, CF(1) - the catalytic core - and CF(0) - the membrane proton channel. CF(1) has five subunits: alpha(3), beta(3), gamma(1), delta(1), epsilon(1). CF(0) has three main subunits: a, b and c.

It localises to the cell inner membrane. Functionally, produces ATP from ADP in the presence of a proton gradient across the membrane. The gamma chain is believed to be important in regulating ATPase activity and the flow of protons through the CF(0) complex. This is ATP synthase gamma chain from Klebsiella pneumoniae subsp. pneumoniae (strain ATCC 700721 / MGH 78578).